Reading from the N-terminus, the 283-residue chain is Protoheme IX farnesyltransferase (283 aa).

A run of 9 helical transmembrane segments spans residues 6-26 (LLLT…AGFL), 35-55 (FGLF…GCVF), 85-105 (AIVF…FYTN), 106-126 (LLTL…YSIW), 131-151 (VYGT…GYCA), 160-180 (AFIL…SIAI), 207-227 (ILLY…FHFT), 230-250 (LYLI…LRGL), and 262-282 (MFRF…FDLV).

The protein belongs to the UbiA prenyltransferase family. Protoheme IX farnesyltransferase subfamily.

The protein localises to the cell inner membrane. The catalysed reaction is heme b + (2E,6E)-farnesyl diphosphate + H2O = Fe(II)-heme o + diphosphate. It functions in the pathway porphyrin-containing compound metabolism; heme O biosynthesis; heme O from protoheme: step 1/1. In terms of biological role, converts heme B (protoheme IX) to heme O by substitution of the vinyl group on carbon 2 of heme B porphyrin ring with a hydroxyethyl farnesyl side group. This is Protoheme IX farnesyltransferase from Protochlamydia amoebophila (strain UWE25).